We begin with the raw amino-acid sequence, 42 residues long: MKFFQAAALLLAMFAALANAEPVPQPGTVLIQTDNTQYIRTG.

Residues 1 to 20 form the signal peptide; it reads MKFFQAAALLLAMFAALANA. The propeptide at 21-26 is removed by a dipeptidylpeptidase; the sequence is EPVPQP. Threonine amide is present on Thr41.

In terms of tissue distribution, hemolymph (at protein level).

It is found in the secreted. Peptide which plays a role in the humoral immune response to a subset of filamentous fungi, including F.oxysporum and F.verticillioides. This Drosophila melanogaster (Fruit fly) protein is Daisho1.